The following is a 473-amino-acid chain: Probable dipeptidase (473 aa).

Residue Cys10 is part of the active site.

It belongs to the peptidase C69 family.

It catalyses the reaction an L-aminoacyl-L-amino acid + H2O = 2 an L-alpha-amino acid. The chain is Probable dipeptidase from Latilactobacillus sakei (Lactobacillus sakei).